Here is a 132-residue protein sequence, read N- to C-terminus: MLKTLQIKTTKRDEMIDITREVEAFLQETGITSGAALIYCPHTTAGITINENADPDVKKDMLRRFDEVYPWEHELDRHMEGNTAAHMKSSTVGASQHVIVENGRLILGTWQGIYFCEFDGPRTRTCYIKMMG.

Belongs to the UPF0047 family.

In Bacillus subtilis (strain 168), this protein is UPF0047 protein YugU (yugU).